Consider the following 88-residue polypeptide: Small ribosomal subunit protein uS17 (88 aa).

Belongs to the universal ribosomal protein uS17 family. In terms of assembly, part of the 30S ribosomal subunit.

Its function is as follows. One of the primary rRNA binding proteins, it binds specifically to the 5'-end of 16S ribosomal RNA. In Synechococcus sp. (strain CC9311), this protein is Small ribosomal subunit protein uS17.